Consider the following 543-residue polypeptide: Hydroxylamine reductase (543 aa).

4 residues coordinate [4Fe-4S] cluster: C5, C8, C17, and C23. H236, E260, C304, C398, C426, C451, E486, and K488 together coordinate hybrid [4Fe-2O-2S] cluster. The residue at position 398 (C398) is a Cysteine persulfide.

This sequence belongs to the HCP family. It depends on [4Fe-4S] cluster as a cofactor. Hybrid [4Fe-2O-2S] cluster is required as a cofactor.

It localises to the cytoplasm. The catalysed reaction is A + NH4(+) + H2O = hydroxylamine + AH2 + H(+). Functionally, catalyzes the reduction of hydroxylamine to form NH(3) and H(2)O. This Bacteroides fragilis (strain YCH46) protein is Hydroxylamine reductase.